The sequence spans 862 residues: DNA mismatch repair protein MutS (862 aa).

604–611 (GPNMAGKS) lines the ATP pocket.

Belongs to the DNA mismatch repair MutS family.

In terms of biological role, this protein is involved in the repair of mismatches in DNA. It is possible that it carries out the mismatch recognition step. This protein has a weak ATPase activity. The chain is DNA mismatch repair protein MutS from Brevibacillus brevis (strain 47 / JCM 6285 / NBRC 100599).